Here is a 308-residue protein sequence, read N- to C-terminus: Ornithine carbamoyltransferase (308 aa).

Residues 55–58 (STRT), Gln-82, Arg-106, and 133–136 (HPCQ) contribute to the carbamoyl phosphate site. L-ornithine contacts are provided by residues Asn-164, Asp-227, and 231 to 232 (SM). Carbamoyl phosphate is bound by residues 267–268 (CL) and Arg-295.

The protein belongs to the aspartate/ornithine carbamoyltransferase superfamily. OTCase family.

It is found in the cytoplasm. It catalyses the reaction carbamoyl phosphate + L-ornithine = L-citrulline + phosphate + H(+). The protein operates within amino-acid biosynthesis; L-arginine biosynthesis; L-arginine from L-ornithine and carbamoyl phosphate: step 1/3. In terms of biological role, reversibly catalyzes the transfer of the carbamoyl group from carbamoyl phosphate (CP) to the N(epsilon) atom of ornithine (ORN) to produce L-citrulline. This is Ornithine carbamoyltransferase from Prochlorococcus marinus subsp. pastoris (strain CCMP1986 / NIES-2087 / MED4).